Here is a 279-residue protein sequence, read N- to C-terminus: DegV domain-containing protein lmo1863 (279 aa).

Residues 4 to 278 form the DegV domain; sequence IKIITDSTAG…TGAFAFMYYT (275 aa). The hexadecanoate site is built by serine 62 and serine 94.

May bind long-chain fatty acids, such as palmitate, and may play a role in lipid transport or fatty acid metabolism. This chain is DegV domain-containing protein lmo1863, found in Listeria monocytogenes serovar 1/2a (strain ATCC BAA-679 / EGD-e).